The primary structure comprises 530 residues: UDP-glucuronosyltransferase 2B15 (530 aa).

The N-terminal stretch at 1 to 23 (MSGKWISALLLLQISFCFKSGNC) is a signal peptide. A glycan (N-linked (GlcNAc...) asparagine) is linked at N316. A helical transmembrane segment spans residues 494–510 (VIGFLLSCVAVTVVLAL).

It belongs to the UDP-glycosyltransferase family. N-glycosylated. In terms of tissue distribution, liver. Lower levels seen in the kidney and testis.

Its subcellular location is the endoplasmic reticulum membrane. The enzyme catalyses glucuronate acceptor + UDP-alpha-D-glucuronate = acceptor beta-D-glucuronoside + UDP + H(+). It carries out the reaction 17alpha-estradiol + UDP-alpha-D-glucuronate = 17alpha-estradiol 3-O-(beta-D-glucuronate) + UDP + H(+). It catalyses the reaction 16alpha,17alpha-estriol + UDP-alpha-D-glucuronate = 16alpha,17alpha-estriol 3-O-(beta-D-glucuronate) + UDP + H(+). The catalysed reaction is 17beta-hydroxy-5alpha-androstan-3-one + UDP-alpha-D-glucuronate = 5alpha-dihydrotestosterone 17-O-(beta-D-glucuronate) + UDP + H(+). Its function is as follows. UDP-glucuronosyltransferase (UGT) that catalyzes phase II biotransformation reactions in which lipophilic substrates are conjugated with glucuronic acid to increase the metabolite's water solubility, thereby facilitating excretion into either the urine or bile. Essential for the elimination and detoxification of drugs, xenobiotics and endogenous compounds. Catalyzes the glucuronidation of endogenous steroid hormones such as androgens (testosterone, androsterone) and estrogens (estradiol, epiestradiol, estriol, catechol estrogens). Displays glucuronidation activity toward several classes of xenoblotic substrates, including phenolic compounds (eugenol, 4-nitrophenol, 4-hydroxybiphenyl) and phenylpropanoids (naringenin, coumarins). Catalyzes the glucuronidation of monoterpenoid alcohols such as borneol, menthol and isomenthol, a class of natural compounds used in essential oils. The sequence is that of UDP-glucuronosyltransferase 2B15 from Rattus norvegicus (Rat).